We begin with the raw amino-acid sequence, 727 residues long: Sodium-dependent neutral amino acid transporter SLC6A17 (727 aa).

The Cytoplasmic portion of the chain corresponds to 1-68 (MPKNSKVTQR…DRPAWNSKLQ (68 aa)). 2 positions are modified to phosphoserine: Ser-13 and Ser-20. A helical transmembrane segment spans residues 69–89 (YILAQIGFSVGLGNIWRFPYL). The Extracellular segment spans residues 90 to 96 (CQKNGGG). A helical membrane pass occupies residues 97 to 116 (AYLVPYLVLLIIIGIPLFFL). The Cytoplasmic segment spans residues 117-140 (ELAVGQRIRRGSIGVWHYVCPRLG). A helical membrane pass occupies residues 141-161 (GIGFSSCIVCLFVGLYYNVII). Over 162–224 (GWSVFYFFKS…NSISESGGLN (63 aa)) the chain is Extracellular. The N-linked (GlcNAc...) asparagine glycan is linked to Asn-186. The chain crosses the membrane as a helical span at residues 225 to 243 (WKMTLCLLVAWSIVGMAVV). Residues 244-251 (KGIQSSGK) are Cytoplasmic-facing. Residues 252–269 (VMYFSSLFPYVVLACFLV) traverse the membrane as a helical segment. Over 270 to 304 (RGLLLRGAVDGILHMFTPKLDKMLDPQVWREAATQ) the chain is Extracellular. Residues 305 to 322 (VFFALGLGFGGVIAFSSY) form a helical membrane-spanning segment. Topologically, residues 323-333 (NKQDNNCHFDA) are cytoplasmic. Residues 334-355 (ALVSFINFFTSVLATLVVFAVL) traverse the membrane as a helical segment. Over 356 to 451 (GFKANIMNEK…FIAFTEAMTH (96 aa)) the chain is Extracellular. Phosphotyrosine is present on Tyr-377. Residue Asn-393 is glycosylated (N-linked (GlcNAc...) asparagine). A helical transmembrane segment spans residues 452–471 (FPASPFWSVMFFLMLINLGL). The Cytoplasmic portion of the chain corresponds to 472–494 (GSMIGTMAGITTPIIDTFKVPKE). A helical membrane pass occupies residues 495-513 (MFTVGCCVFAFFVGLLFVQ). At 514 to 528 (RSGNYFVTMFDDYSA) the chain is on the extracellular side. Residues 529 to 549 (TLPLTVIVILENIAVAWIYGT) form a helical membrane-spanning segment. Residues 550 to 569 (KKFMQELTEMLGFQPYRFYF) lie on the Cytoplasmic side of the membrane. A helical membrane pass occupies residues 570–591 (YMWKFVSPLCMAVLTTASIIQL). Residues 592–618 (GVSPPGYSAWIKEEAAERYLYFPNWAM) lie on the Extracellular side of the membrane. A helical membrane pass occupies residues 619-641 (ALLITLIAVATLPIPVVFILRHF). Over 642 to 727 (HLLSDGSNTL…LLASTPESEL (86 aa)) the chain is Cytoplasmic. 2 positions are modified to phosphoserine: Ser-665 and Ser-701. Residues 680 to 727 (VPSEAPSPMPTHRSYLGPGSTSPLDNSNNPNGRYGSGYLLASTPESEL) form a disordered region. Over residues 698–710 (GSTSPLDNSNNPN) the composition is skewed to polar residues.

It belongs to the sodium:neurotransmitter symporter (SNF) (TC 2.A.22) family. As to expression, expressed in the brain. The strongest expression levels in embryonic, postnatal, and adult stages are found in both cortical and hippocampal tissues.

Its subcellular location is the cytoplasmic vesicle. The protein localises to the secretory vesicle. It is found in the synaptic vesicle membrane. The protein resides in the postsynapse. It localises to the presynapse. The catalysed reaction is L-proline(in) + Na(+)(in) = L-proline(out) + Na(+)(out). The enzyme catalyses L-leucine(in) + Na(+)(in) = L-leucine(out) + Na(+)(out). It carries out the reaction glycine(in) + Na(+)(in) = glycine(out) + Na(+)(out). It catalyses the reaction L-alanine(in) + Na(+)(in) = L-alanine(out) + Na(+)(out). The catalysed reaction is L-glutamine(in) + Na(+)(in) = L-glutamine(out) + Na(+)(out). Functionally, synaptic vesicle transporter with apparent selectivity for neutral amino acids. The transport is sodium-coupled but chloride-independent, likely driven by the proton electrochemical gradient generated by vacuolar H(+)-ATPase in an overall electrogenic mechanism. May contribute to the synaptic uptake of neurotransmitter precursors in a process coupled in part to vesicle exocytosis. This Mus musculus (Mouse) protein is Sodium-dependent neutral amino acid transporter SLC6A17.